A 593-amino-acid polypeptide reads, in one-letter code: Numb-related protein 1 (593 aa).

4 disordered regions span residues 1–97 (MSAS…WQPD), 235–278 (TAQV…NSRS), 331–375 (LRQG…FGTQ), and 493–581 (MSMS…DPFD). Ser17 carries the phosphoserine; by PKC modification. Residues 27 to 37 (QNSLVSEQQPS) show a composition bias toward polar residues. Residues 64–74 (RSLRLPKKRRD) show a composition bias toward basic residues. The residue at position 65 (Ser65) is a Phosphoserine; by PKC. The PID domain occupies 102-255 (RTGTCCFNVK…STSSTPPKDI (154 aa)). 3 stretches are compositionally biased toward polar residues: residues 236 to 251 (AQVN…SSTP), 261 to 278 (EDNT…NSRS), and 354 to 364 (SLRTVSNNPTE). Residues 493-511 (MSMSPTSPSSDPPSTSSYS) show a composition bias toward low complexity. Pro residues predominate over residues 516–528 (SGPPPAHAPPPLP). A compositionally biased stretch (polar residues) spans 532 to 565 (AVSNGSPSIYQQQLQQANSTRNSPAGINWNSSPN).

As to quaternary structure, interacts with pkc-3. In terms of tissue distribution, expressed in cells comprising the intestine, pharyngeal cells, the anal sphincter and depressor muscles.

The protein resides in the cytoplasm. The protein localises to the cell cortex. It is found in the cytoskeleton. It localises to the membrane. Functionally, involved in the tethering and targeting of pkc-3 to modulate the intracellular distribution of the kinase. The complex formed with pkc-3 complexes are likely to be involved in assembly, maintenance, and/or regulation of protein complexes that execute asymmetric and/or polarized cell functions. The sequence is that of Numb-related protein 1 from Caenorhabditis elegans.